Reading from the N-terminus, the 192-residue chain is UPF0462 protein C4orf33 homolog (192 aa).

Belongs to the UPF0462 family.

The polypeptide is UPF0462 protein C4orf33 homolog (D3Ertd751e) (Mus musculus (Mouse)).